The sequence spans 399 residues: Succinate--CoA ligase [ADP-forming] subunit beta (399 aa).

One can recognise an ATP-grasp domain in the interval lysine 9–glutamate 254. Residues lysine 46, glycine 53–glycine 55, glutamate 109, serine 112, and glutamate 117 each bind ATP. 2 residues coordinate Mg(2+): asparagine 209 and aspartate 223. Residues asparagine 274 and glycine 331–methionine 333 each bind substrate.

It belongs to the succinate/malate CoA ligase beta subunit family. In terms of assembly, heterotetramer of two alpha and two beta subunits. Mg(2+) serves as cofactor.

It catalyses the reaction succinate + ATP + CoA = succinyl-CoA + ADP + phosphate. The catalysed reaction is GTP + succinate + CoA = succinyl-CoA + GDP + phosphate. Its pathway is carbohydrate metabolism; tricarboxylic acid cycle; succinate from succinyl-CoA (ligase route): step 1/1. Functionally, succinyl-CoA synthetase functions in the citric acid cycle (TCA), coupling the hydrolysis of succinyl-CoA to the synthesis of either ATP or GTP and thus represents the only step of substrate-level phosphorylation in the TCA. The beta subunit provides nucleotide specificity of the enzyme and binds the substrate succinate, while the binding sites for coenzyme A and phosphate are found in the alpha subunit. In Nitrobacter winogradskyi (strain ATCC 25391 / DSM 10237 / CIP 104748 / NCIMB 11846 / Nb-255), this protein is Succinate--CoA ligase [ADP-forming] subunit beta.